A 510-amino-acid chain; its full sequence is Propionyl-CoA carboxylase beta chain (510 aa).

Positions 1 to 257 (MKDILQELEN…SNRTPAPVRP (257 aa)) constitute a CoA carboxyltransferase N-terminal domain. Residues 1–504 (MKDILQELEN…NKKLANPWKK (504 aa)) form a carboxyltransferase region. One can recognise a CoA carboxyltransferase C-terminal domain in the interval 264 to 504 (RIEDSLDTLI…NKKLANPWKK (241 aa)).

The protein belongs to the AccD/PCCB family. Probably a dodecamer composed of six biotin-containing alpha subunits and six beta subunits.

The catalysed reaction is propanoyl-CoA + hydrogencarbonate + ATP = (S)-methylmalonyl-CoA + ADP + phosphate + H(+). The protein operates within metabolic intermediate metabolism; propanoyl-CoA degradation; succinyl-CoA from propanoyl-CoA: step 1/3. The protein is Propionyl-CoA carboxylase beta chain of Cereibacter sphaeroides (strain ATCC 17023 / DSM 158 / JCM 6121 / CCUG 31486 / LMG 2827 / NBRC 12203 / NCIMB 8253 / ATH 2.4.1.) (Rhodobacter sphaeroides).